The primary structure comprises 238 residues: Orotidine 5'-phosphate decarboxylase (238 aa).

Residues D10, K32, 59–68 (DLKLHDIPNT), T122, R184, Q193, G213, and R214 each bind substrate. The active-site Proton donor is the K61.

It belongs to the OMP decarboxylase family. Type 1 subfamily. Homodimer.

The catalysed reaction is orotidine 5'-phosphate + H(+) = UMP + CO2. It functions in the pathway pyrimidine metabolism; UMP biosynthesis via de novo pathway; UMP from orotate: step 2/2. Its function is as follows. Catalyzes the decarboxylation of orotidine 5'-monophosphate (OMP) to uridine 5'-monophosphate (UMP). In Bacillus thuringiensis subsp. konkukian (strain 97-27), this protein is Orotidine 5'-phosphate decarboxylase.